The following is a 506-amino-acid chain: Glycerol kinase (506 aa).

Thr12 contacts ADP. ATP is bound by residues Thr12, Thr13, and Ser14. Thr12 serves as a coordination point for sn-glycerol 3-phosphate. ADP is bound at residue Arg16. Sn-glycerol 3-phosphate contacts are provided by Arg82, Glu83, Tyr134, and Asp246. Residues Arg82, Glu83, Tyr134, Asp246, and Gln247 each contribute to the glycerol site. Residues Thr268 and Gly312 each coordinate ADP. Thr268, Gly312, Gln316, and Gly413 together coordinate ATP. Residues Gly413 and Asn417 each contribute to the ADP site.

This sequence belongs to the FGGY kinase family.

It catalyses the reaction glycerol + ATP = sn-glycerol 3-phosphate + ADP + H(+). It functions in the pathway polyol metabolism; glycerol degradation via glycerol kinase pathway; sn-glycerol 3-phosphate from glycerol: step 1/1. Its activity is regulated as follows. Inhibited by fructose 1,6-bisphosphate (FBP). Functionally, key enzyme in the regulation of glycerol uptake and metabolism. Catalyzes the phosphorylation of glycerol to yield sn-glycerol 3-phosphate. This is Glycerol kinase from Leifsonia xyli subsp. xyli (strain CTCB07).